A 372-amino-acid chain; its full sequence is Zinc finger protein dpff-1 (372 aa).

The disordered stretch occupies residues 108–204 (VGPTTESVSD…SRSIVKETKY (97 aa)). Over residues 109–131 (GPTTESVSDSSNDSTTIRPSRQT) the composition is skewed to polar residues. Basic and acidic residues predominate over residues 132–141 (QIKEEYRDDY). Residues 142-158 (VLDDELSPDEFGSDEDD) show a composition bias toward acidic residues. The segment covering 184–196 (TTRSSVSRLTPSR) has biased composition (polar residues). A C2H2-type zinc finger spans residues 212–235 (YPCDKCSAKYKSLAGLSYHQSYLH). PHD-type zinc fingers lie at residues 256-314 (SCDF…CKSC) and 316-361 (ICGT…CQVE).

Belongs to the requiem/DPF family.

The protein localises to the nucleus. It is found in the cytoplasm. Functionally, probable transcription factor, involved in meiosis and stress protection. In Caenorhabditis elegans, this protein is Zinc finger protein dpff-1.